The sequence spans 114 residues: Nucleoid-associated protein NT01CX_0824 (114 aa).

The protein belongs to the YbaB/EbfC family. As to quaternary structure, homodimer.

The protein localises to the cytoplasm. Its subcellular location is the nucleoid. In terms of biological role, binds to DNA and alters its conformation. May be involved in regulation of gene expression, nucleoid organization and DNA protection. The chain is Nucleoid-associated protein NT01CX_0824 from Clostridium novyi (strain NT).